The chain runs to 55 residues: MAKPTTVKIKLVSTADTGFFYVTKKNPRTMTEKMTVRKYDPRARKHVEFKEAKIK.

The protein belongs to the bacterial ribosomal protein bL33 family.

This is Large ribosomal subunit protein bL33 from Sphingopyxis alaskensis (strain DSM 13593 / LMG 18877 / RB2256) (Sphingomonas alaskensis).